Consider the following 260-residue polypeptide: Phosphatidate cytidylyltransferase (260 aa).

7 consecutive transmembrane segments (helical) span residues 9–29 (IIALLIFLPILLKGGLILMLF), 46–66 (MIKFLSIPGLISALALIIIML), 70–90 (AGEWVQVIQLKGLIAMSFIVL), 102–122 (FMDAAFCLMSVAYVGIGFMYF), 130–150 (LRYILFAFLIVWLTDTGAYIF), 172–192 (FFGGILCSILVPLVMQMFVDL), and 196–216 (IWLLLLVTIVLSMFGQLGDLV).

This sequence belongs to the CDS family.

Its subcellular location is the cell membrane. It catalyses the reaction a 1,2-diacyl-sn-glycero-3-phosphate + CTP + H(+) = a CDP-1,2-diacyl-sn-glycerol + diphosphate. It participates in phospholipid metabolism; CDP-diacylglycerol biosynthesis; CDP-diacylglycerol from sn-glycerol 3-phosphate: step 3/3. The chain is Phosphatidate cytidylyltransferase (cdsA) from Staphylococcus epidermidis (strain ATCC 35984 / DSM 28319 / BCRC 17069 / CCUG 31568 / BM 3577 / RP62A).